Here is a 337-residue protein sequence, read N- to C-terminus: tRNA N6-adenosine threonylcarbamoyltransferase (337 aa).

Fe cation contacts are provided by His111 and His115. Substrate contacts are provided by residues 134-138 (LVSGG), Asp167, Gly180, and Asn272. Asp300 is a Fe cation binding site.

This sequence belongs to the KAE1 / TsaD family. Fe(2+) serves as cofactor.

It localises to the cytoplasm. The enzyme catalyses L-threonylcarbamoyladenylate + adenosine(37) in tRNA = N(6)-L-threonylcarbamoyladenosine(37) in tRNA + AMP + H(+). Functionally, required for the formation of a threonylcarbamoyl group on adenosine at position 37 (t(6)A37) in tRNAs that read codons beginning with adenine. Is involved in the transfer of the threonylcarbamoyl moiety of threonylcarbamoyl-AMP (TC-AMP) to the N6 group of A37, together with TsaE and TsaB. TsaD likely plays a direct catalytic role in this reaction. The sequence is that of tRNA N6-adenosine threonylcarbamoyltransferase from Enterobacter sp. (strain 638).